The sequence spans 390 residues: Na(+)/H(+) antiporter NhaA (390 aa).

12 helical membrane-spanning segments follow: residues 14–34 (AAGG…ANLN), 61–81 (MLLW…GLEV), 97–117 (SLPV…YLAF), 126–146 (AGWA…LALL), 156–176 (VFLM…IALF), 181–201 (LSMV…VLNL), 221–241 (VLKS…FVPL), 256–276 (ALHP…NAGV), 280–300 (GVTL…GLFI), 305–325 (GISL…PPGV), 330–350 (ILAV…IASL), and 362–382 (WAKL…YALL).

It belongs to the NhaA Na(+)/H(+) (TC 2.A.33) antiporter family.

It is found in the cell inner membrane. The enzyme catalyses Na(+)(in) + 2 H(+)(out) = Na(+)(out) + 2 H(+)(in). Its function is as follows. Na(+)/H(+) antiporter that extrudes sodium in exchange for external protons. The sequence is that of Na(+)/H(+) antiporter NhaA from Cronobacter sakazakii (strain ATCC BAA-894) (Enterobacter sakazakii).